The sequence spans 99 residues: Protein translation factor SUI1 homolog (99 aa).

It belongs to the SUI1 family.

The protein is Protein translation factor SUI1 homolog of Pyrococcus horikoshii (strain ATCC 700860 / DSM 12428 / JCM 9974 / NBRC 100139 / OT-3).